Consider the following 654-residue polypeptide: Fructose-1,6-bisphosphatase class 3 (654 aa).

Belongs to the FBPase class 3 family. Mn(2+) is required as a cofactor.

It carries out the reaction beta-D-fructose 1,6-bisphosphate + H2O = beta-D-fructose 6-phosphate + phosphate. The protein operates within carbohydrate biosynthesis; gluconeogenesis. The polypeptide is Fructose-1,6-bisphosphatase class 3 (Staphylococcus epidermidis (strain ATCC 35984 / DSM 28319 / BCRC 17069 / CCUG 31568 / BM 3577 / RP62A)).